Here is a 78-residue protein sequence, read N- to C-terminus: Large ribosomal subunit protein bL28 (78 aa).

This sequence belongs to the bacterial ribosomal protein bL28 family.

This chain is Large ribosomal subunit protein bL28, found in Glaesserella parasuis serovar 5 (strain SH0165) (Haemophilus parasuis).